A 1204-amino-acid polypeptide reads, in one-letter code: Cingulin (1204 aa).

Residues 7–357 (MAEPRGPVDH…GVISSGSSKA (351 aa)) are head. The interval 25–48 (EPVSGAEMGTLRRGGRRPAKDARA) is disordered. Residues 48-62 (ASTYGVAVRVQGIAG) carry the ZIM motif. Residues 54–67 (AVRVQGIAGQPFVV) are interaction with TJP1/ZO1. Disordered regions lie at residues 68 to 174 (LNSG…DTAP) and 186 to 266 (DGQL…FSRA). Residues 93-119 (ALSSDSELPENPYSQVQGFPAPSQSST) are compositionally biased toward polar residues. Phosphoserine occurs at positions 95, 96, 98, 135, 137, 140, 155, 165, 214, and 217. Basic and acidic residues predominate over residues 207–231 (EQRKRSKSLDSRLPRDTLEERERQS). The segment covering 232 to 245 (TNHWNPSTKYNNHV) has biased composition (polar residues). Residues 247–261 (SLKQPAQSPSPSPLS) show a composition bias toward low complexity. Phosphoserine occurs at positions 258, 276, 338, and 351. A coiled-coil region spans residues 358-1161 (MAGQGELARK…SLEKDSWRKA (804 aa)). The tract at residues 379–398 (VKKRQKLEPSRAGLERQLEE) is disordered. Residue Lys579 is modified to N6-acetyllysine. The disordered stretch occupies residues 1161–1182 (ASRSAAESALKHEGLSSDEEFD). Positions 1162–1204 (SRSAAESALKHEGLSSDEEFDSVYDPSSIASLLTESNLQTSSC) are tail. A phosphoserine mark is found at Ser1176, Ser1177, and Ser1183.

This sequence belongs to the cingulin family. As to quaternary structure, homodimer. Interacts with TJP1/ZO1 and SPEF1.

It localises to the cell junction. The protein localises to the tight junction. Functionally, probably plays a role in the formation and regulation of the tight junction (TJ) paracellular permeability barrier. The sequence is that of Cingulin from Plecturocebus moloch (Dusky titi monkey).